Reading from the N-terminus, the 180-residue chain is MIVTEILGNIHEDSGRELVAGRHVEKVVLPSAELVKRIQRLRTDHDRQIGLRLPAGAPDLRDGDVVAVEDAAPSGAGHGDGEQDGTGAPGRGNAVVIQVLPTDVLVIGARSVVEMAFVAHSLGNRHLQAQFFDADSEYGAEVMVVQYDHTVQDFLDHHGVPYSRQERVMPVPFRHAEHTH.

Positions 71-90 are disordered; that stretch reads AAPSGAGHGDGEQDGTGAPG.

The protein belongs to the UreE family.

Its subcellular location is the cytoplasm. Involved in urease metallocenter assembly. Binds nickel. Probably functions as a nickel donor during metallocenter assembly. This is Urease accessory protein UreE from Kocuria rhizophila (strain ATCC 9341 / DSM 348 / NBRC 103217 / DC2201).